Reading from the N-terminus, the 187-residue chain is Large ribosomal subunit protein eL18A (187 aa).

Phosphoserine occurs at positions 16 and 64. 3 positions are modified to phosphothreonine: Thr-87, Thr-89, and Thr-134. Residue Ser-136 is modified to Phosphoserine. Residue Thr-138 is modified to Phosphothreonine.

It belongs to the eukaryotic ribosomal protein eL18 family. As to quaternary structure, component of the large ribosomal subunit (LSU). Mature yeast ribosomes consist of a small (40S) and a large (60S) subunit. The 40S small subunit contains 1 molecule of ribosomal RNA (18S rRNA) and at least 33 different proteins. The large 60S subunit contains 3 rRNA molecules (25S, 5.8S and 5S rRNA) and at least 46 different proteins. eL18 interacts with NAP1.

It is found in the cytoplasm. Its function is as follows. Component of the ribosome, a large ribonucleoprotein complex responsible for the synthesis of proteins in the cell. The small ribosomal subunit (SSU) binds messenger RNAs (mRNAs) and translates the encoded message by selecting cognate aminoacyl-transfer RNA (tRNA) molecules. The large subunit (LSU) contains the ribosomal catalytic site termed the peptidyl transferase center (PTC), which catalyzes the formation of peptide bonds, thereby polymerizing the amino acids delivered by tRNAs into a polypeptide chain. The nascent polypeptides leave the ribosome through a tunnel in the LSU and interact with protein factors that function in enzymatic processing, targeting, and the membrane insertion of nascent chains at the exit of the ribosomal tunnel. This Schizosaccharomyces pombe (strain 972 / ATCC 24843) (Fission yeast) protein is Large ribosomal subunit protein eL18A (rpl1801).